Here is a 122-residue protein sequence, read N- to C-terminus: Large ribosomal subunit protein uL18 (122 aa).

The protein belongs to the universal ribosomal protein uL18 family. As to quaternary structure, part of the 50S ribosomal subunit; part of the 5S rRNA/L5/L18/L25 subcomplex. Contacts the 5S and 23S rRNAs.

In terms of biological role, this is one of the proteins that bind and probably mediate the attachment of the 5S RNA into the large ribosomal subunit, where it forms part of the central protuberance. This chain is Large ribosomal subunit protein uL18, found in Prochlorococcus marinus (strain AS9601).